Reading from the N-terminus, the 38-residue chain is Augerpeptide hhe53 (38 aa).

In terms of processing, contains 2 disulfide bonds. In terms of tissue distribution, expressed by the venom duct.

The protein resides in the secreted. The sequence is that of Augerpeptide hhe53 from Hastula hectica (Sea snail).